The chain runs to 265 residues: UDP-N-acetylenolpyruvoylglucosamine reductase (265 aa).

One can recognise an FAD-binding PCMH-type domain in the interval 15–169 (GVGGPAELWT…TRVRLKLKER (155 aa)). The active site involves Arg149. Residues 182 to 203 (DRARKGQPKRKSAGCAFKNPPG) are disordered. Residue Cys196 is the Proton donor of the active site.

Belongs to the MurB family. FAD is required as a cofactor.

The protein resides in the cytoplasm. The catalysed reaction is UDP-N-acetyl-alpha-D-muramate + NADP(+) = UDP-N-acetyl-3-O-(1-carboxyvinyl)-alpha-D-glucosamine + NADPH + H(+). Its pathway is cell wall biogenesis; peptidoglycan biosynthesis. Functionally, cell wall formation. The sequence is that of UDP-N-acetylenolpyruvoylglucosamine reductase from Thermus thermophilus (strain ATCC BAA-163 / DSM 7039 / HB27).